Consider the following 129-residue polypeptide: Histone H2B.1 (129 aa).

Residues 1 to 19 (MAPKAEKKPASKAPAEKKP) are compositionally biased toward basic and acidic residues. The tract at residues 1–37 (MAPKAEKKPASKAPAEKKPAAKKTASTDSKKRTKTRK) is disordered. 2 positions are modified to N6-acetyllysine; alternate: K7 and K8. Residues K7 and K8 each participate in a glycyl lysine isopeptide (Lys-Gly) (interchain with G-Cter in SUMO); alternate cross-link. The residue at position 11 (S11) is a Phosphoserine. K12 carries the N6-acetyllysine modification. Position 17 is an N6-acetyllysine; alternate (K17). Residue K17 forms a Glycyl lysine isopeptide (Lys-Gly) (interchain with G-Cter in SUMO); alternate linkage. Residue K18 forms a Glycyl lysine isopeptide (Lys-Gly) (interchain with G-Cter in SUMO) linkage. K123 participates in a covalent cross-link: Glycyl lysine isopeptide (Lys-Gly) (interchain with G-Cter in ubiquitin).

It belongs to the histone H2B family. As to quaternary structure, the nucleosome is a histone octamer containing two molecules each of H2A, H2B, H3 and H4 assembled in one H3-H4 heterotetramer and two H2A-H2B heterodimers. The octamer wraps approximately 147 bp of DNA. Monoubiquitinated by the UBC2-BRE1 complex to form H2BK123ub1. H2BK123ub1 gives a specific tag for epigenetic transcriptional activation and is also prerequisite for H3K4me and H3K79me formation. H2BK123ub1 also modulates the formation of double-strand breaks during meiosis and is a prerequisite for DNA-damage checkpoint activation. Post-translationally, phosphorylated by STE20 to form H2BS10ph during progression through meiotic prophase. May be correlated with chromosome condensation. In terms of processing, acetylated by GCN5 to form H2BK11ac and H2BK16ac. H2BK16ac can also be formed by ESA1. Acetylation of N-terminal lysines and particularly formation of H2BK11acK16ac has a positive effect on transcription. Sumoylation to form H2BK6su or H2BK7su, and probably also H2BK16su or H2BK17su, occurs preferentially near the telomeres and represses gene transcription.

It localises to the nucleus. The protein localises to the chromosome. In terms of biological role, core component of nucleosome. Nucleosomes wrap and compact DNA into chromatin, limiting DNA accessibility to the cellular machineries which require DNA as a template. Histones thereby play a central role in transcription regulation, DNA repair, DNA replication and chromosomal stability. DNA accessibility is regulated via a complex set of post-translational modifications of histones, also called histone code, and nucleosome remodeling. The chain is Histone H2B.1 (HTB1) from Meyerozyma guilliermondii (strain ATCC 6260 / CBS 566 / DSM 6381 / JCM 1539 / NBRC 10279 / NRRL Y-324) (Yeast).